Consider the following 322-residue polypeptide: Pantothenate kinase (322 aa).

101 to 108 is a binding site for ATP; it reads GSVAVGKS.

This sequence belongs to the prokaryotic pantothenate kinase family.

The protein localises to the cytoplasm. It carries out the reaction (R)-pantothenate + ATP = (R)-4'-phosphopantothenate + ADP + H(+). It functions in the pathway cofactor biosynthesis; coenzyme A biosynthesis; CoA from (R)-pantothenate: step 1/5. The sequence is that of Pantothenate kinase from Psychromonas ingrahamii (strain DSM 17664 / CCUG 51855 / 37).